The sequence spans 121 residues: Large ribosomal subunit protein bL12 (121 aa).

It belongs to the bacterial ribosomal protein bL12 family. Homodimer. Part of the ribosomal stalk of the 50S ribosomal subunit. Forms a multimeric L10(L12)X complex, where L10 forms an elongated spine to which 2 to 4 L12 dimers bind in a sequential fashion. Binds GTP-bound translation factors.

Forms part of the ribosomal stalk which helps the ribosome interact with GTP-bound translation factors. Is thus essential for accurate translation. This Pseudomonas syringae pv. tomato (strain ATCC BAA-871 / DC3000) protein is Large ribosomal subunit protein bL12.